The following is a 252-amino-acid chain: NAD(P)H-quinone oxidoreductase subunit K (252 aa).

Residues Cys-73, Cys-74, Cys-138, and Cys-169 each contribute to the [4Fe-4S] cluster site. Positions 225–236 (ASTQKQALSPSQ) are enriched in polar residues. Residues 225 to 252 (ASTQKQALSPSQEIPLEDQNEATKEIAQ) are disordered.

Belongs to the complex I 20 kDa subunit family. NDH-1 can be composed of about 15 different subunits; different subcomplexes with different compositions have been identified which probably have different functions. [4Fe-4S] cluster serves as cofactor.

The protein resides in the cellular thylakoid membrane. It carries out the reaction a plastoquinone + NADH + (n+1) H(+)(in) = a plastoquinol + NAD(+) + n H(+)(out). The catalysed reaction is a plastoquinone + NADPH + (n+1) H(+)(in) = a plastoquinol + NADP(+) + n H(+)(out). In terms of biological role, NDH-1 shuttles electrons from an unknown electron donor, via FMN and iron-sulfur (Fe-S) centers, to quinones in the respiratory and/or the photosynthetic chain. The immediate electron acceptor for the enzyme in this species is believed to be plastoquinone. Couples the redox reaction to proton translocation, and thus conserves the redox energy in a proton gradient. Cyanobacterial NDH-1 also plays a role in inorganic carbon-concentration. This chain is NAD(P)H-quinone oxidoreductase subunit K, found in Prochlorococcus marinus (strain MIT 9211).